The following is a 413-amino-acid chain: Phosphopentomutase (413 aa).

Mn(2+) contacts are provided by Asp-11, Asp-306, His-311, Asp-347, His-348, and His-359.

Belongs to the phosphopentomutase family. Mn(2+) is required as a cofactor.

It localises to the cytoplasm. It catalyses the reaction 2-deoxy-alpha-D-ribose 1-phosphate = 2-deoxy-D-ribose 5-phosphate. The enzyme catalyses alpha-D-ribose 1-phosphate = D-ribose 5-phosphate. It participates in carbohydrate degradation; 2-deoxy-D-ribose 1-phosphate degradation; D-glyceraldehyde 3-phosphate and acetaldehyde from 2-deoxy-alpha-D-ribose 1-phosphate: step 1/2. Functionally, isomerase that catalyzes the conversion of deoxy-ribose 1-phosphate (dRib-1-P) and ribose 1-phosphate (Rib-1-P) to deoxy-ribose 5-phosphate (dRib-5-P) and ribose 5-phosphate (Rib-5-P), respectively. In Helicobacter pylori (strain ATCC 700392 / 26695) (Campylobacter pylori), this protein is Phosphopentomutase.